A 649-amino-acid polypeptide reads, in one-letter code: Transcription factor E2-alpha (649 aa).

Disordered stretches follow at residues 37–107, 132–207, 296–325, and 339–376; these read RPAS…SERN, GLSS…AKTP, TYSG…SSSG, and DHSS…ALSP. Polar residues predominate over residues 57 to 71; that stretch reads SESWGNSEQNSSSFD. Over residues 132–148 the composition is skewed to low complexity; it reads GLSSPGPLSPSGVKSSS. Phosphoserine is present on residues serine 135 and serine 140. The Nuclear localization signal signature appears at 171–177; sequence PKKVRKV. Residues 339–352 show a composition bias toward low complexity; the sequence is DHSSNNFSPSPSTP. Threonine 351 is modified (phosphothreonine). Residue serine 355 is modified to Phosphoserine. Arginine 367 carries the post-translational modification Omega-N-methylarginine. The residue at position 375 (serine 375) is a Phosphoserine. The tract at residues 385 to 420 is leucine-zipper; that stretch reads LSKMEDRLDEAIHVLRSHAVGTASELHGLLPGHSTL. The disordered stretch occupies residues 435-547; sequence AGLVSGSHPE…KAEREKERRV (113 aa). Low complexity predominate over residues 459 to 477; it reads SLPSQPSSLPDLSQRPPDS. Residue lysine 494 forms a Glycyl lysine isopeptide (Lys-Gly) (interchain with G-Cter in SUMO2) linkage. The residue at position 524 (serine 524) is a Phosphoserine. Residue aspartate 526 is modified to Phosphothreonine. The span at 537–547 shows a compositional bias: basic and acidic residues; sequence QKAEREKERRV. The region spanning 544 to 597 is the bHLH domain; sequence ERRVANNARERLRVRDINEAFKELGRMCQLHLSTEKPQTKLLILHQAVAVILSL. Lysine 620 is covalently cross-linked (Glycyl lysine isopeptide (Lys-Gly) (interchain with G-Cter in SUMO2)).

In terms of assembly, homodimer. Heterodimer; efficient DNA binding requires dimerization with another bHLH protein. Forms a heterodimer with TWIST1 and TWIST2. Forms a heterodimer with NEUROD1; the heterodimer is inhibited in presence of ID2, but not NR0B2, to E-box element. Forms a heterodimer with TCF15; the heterodimer binds E-box element. Forms a heterodimer with MYOG; heterodimerization enhances MYOG DNA-binding and transcriptional activities. Forms a heterodimer with ATOH8; repress transcription of TCF3 and TCF3-NEUROG3 dimer-induced transactivation of E box-dependent promoters. Component of a nuclear TAL-1 complex composed at least of CBFA2T3, LDB1, TAL1 and TCF3. Interacts with NEUROD2. Interacts with EP300. Interacts with PTF1A, TGFB1I1. Interacts with UBE2I. Interacts with BHLHA9. Interacts with ASB2; the interaction is mediated by SKP2 and targets TCF3 for Notch-induced proteasomal degradation. Interacts with transcription factor ASCL5/AmeloD. Interacts with RALGAPA1. Interacts with FIGLA. As to quaternary structure, forms a heterodimer with ATOH7; required for ATOH7 DNA-binding. Post-translationally, phosphorylated following NGF stimulation. In terms of processing, undergoes Notch-induced ubiquitination and subsequent proteasomal degradation which is mediated by ASB1 or ASB2, the substrate-recognition components of probable ECS E3 ubiquitin-protein ligase complexes.

It is found in the nucleus. Transcriptional regulator involved in the initiation of neuronal differentiation and mesenchymal to epithelial transition. Heterodimers between TCF3 and tissue-specific basic helix-loop-helix (bHLH) proteins play major roles in determining tissue-specific cell fate during embryogenesis, like muscle or early B-cell differentiation. Together with TCF15, required for the mesenchymal to epithelial transition. Dimers bind DNA on E-box motifs: 5'-CANNTG-3'. Binds to the kappa-E2 site in the kappa immunoglobulin gene enhancer. Binds to the consensus sequence CAC/GCTGT/C present, in the chymotrypsin, insulin, AP-4, and several other gene enhancer motifs. Its function is as follows. Facilitates ATOH7 binding to DNA at the consensus sequence 5'-CAGGTG-3', and positively regulates transcriptional activity. This chain is Transcription factor E2-alpha (Tcf3), found in Rattus norvegicus (Rat).